Reading from the N-terminus, the 245-residue chain is Derlin-1 (245 aa).

Topologically, residues 1 to 17 (MDAGVWYRSLPRFTRYW) are cytoplasmic. The chain crosses the membrane as a helical span at residues 18 to 38 (LTATVVLSMLCRFDVIPLHWL). Residues 39 to 58 (HLDRSAVFSKLQLWRCMTSL) lie on the Lumenal side of the membrane. A helical membrane pass occupies residues 59–79 (FVFPISSNTAFHFLINCFFIV). The Cytoplasmic segment spans residues 80–99 (QYSSKLEKDQYSRSPADYLY). A helical membrane pass occupies residues 100–120 (LLIVSAVLANIGGMIFNVYFL). Residues 121–156 (MDTLVLAITYIWCQLNKDVTVSFWFGTRFKAMYLPW) are Lumenal-facing. A helical transmembrane segment spans residues 157 to 177 (VLAAFEFIFHFSLASLVGIFV). Over 178–245 (GHVYYFFKFQ…WGRGMTLGRN (68 aa)) the chain is Cytoplasmic. Residues 218 to 245 (FGLPPESRAPPRQATESPWGRGMTLGRN) are disordered.

It belongs to the derlin family.

The protein localises to the endoplasmic reticulum membrane. Functionally, may be involved in the degradation process of specific misfolded endoplasmic reticulum (ER) luminal proteins. May also involved in endoplasmic reticulum stress-induced pre-emptive quality control, a mechanism that selectively attenuates the translocation of newly synthesized proteins into the endoplasmic reticulum and reroutes them to the cytosol for proteasomal degradation. This is Derlin-1 from Drosophila melanogaster (Fruit fly).